A 575-amino-acid polypeptide reads, in one-letter code: Interleukin-1 receptor-like 2 (575 aa).

The N-terminal stretch at 1–19 (MWSLLLCGLSIALPLSVTA) is a signal peptide. Ig-like C2-type domains are found at residues 20–111 (DGCK…VNLT), 126–211 (PNLS…VLNG), and 222–318 (YGGS…MCHA). Residues 20-335 (DGCKDIFMKN…ILQLPAPDFR (316 aa)) are Extracellular-facing. Residues asparagine 41, asparagine 59, asparagine 109, asparagine 127, asparagine 184, asparagine 234, asparagine 250, asparagine 266, and asparagine 299 are each glycosylated (N-linked (GlcNAc...) asparagine). An intrachain disulfide couples cysteine 42 to cysteine 95. A disulfide bond links cysteine 146 and cysteine 195. Cysteine 249 and cysteine 316 are joined by a disulfide. A helical membrane pass occupies residues 336-356 (AYLIGGLIALVAVAVSVVYIY). Topologically, residues 357–575 (NIFKIDIVLW…RRKKCTLTTG (219 aa)) are cytoplasmic. In terms of domain architecture, TIR spans 381–536 (KLYDAYVLYP…KFWKTVRYHM (156 aa)). Glutamate 467 is a catalytic residue.

The protein belongs to the interleukin-1 receptor family. In terms of assembly, interacts with IL1RAP; the association is enhanced by IL36B indicative for an functional signaling complex and inhibited by IL36RN. Expressed in synovial fibroblasts and articular chondrocytes. Expressed in keratinocytes and monocyte-derived dendritic cells. Expressed in monocytes and myeloid dendritic cells; at protein level.

It is found in the membrane. The enzyme catalyses NAD(+) + H2O = ADP-D-ribose + nicotinamide + H(+). In terms of biological role, receptor for interleukin-36 (IL36A, IL36B and IL36G). After binding to interleukin-36 associates with the coreceptor IL1RAP to form the interleukin-36 receptor complex which mediates interleukin-36-dependent activation of NF-kappa-B, MAPK and other pathways. The IL-36 signaling system is thought to be present in epithelial barriers and to take part in local inflammatory response; it is similar to the IL-1 system. Seems to be involved in skin inflammatory response by induction of the IL-23/IL-17/IL-22 pathway. This chain is Interleukin-1 receptor-like 2 (IL1RL2), found in Homo sapiens (Human).